Reading from the N-terminus, the 578-residue chain is L-ascorbate oxidase (578 aa).

Positions Met1–Ala28 are cleaved as a signal peptide. 2 consecutive Plastocyanin-like domains span residues Thr30–Glu149 and Asp161–Pro328. Cu cation is bound by residues His87, His89, His131, and His133. Intrachain disulfides connect Cys108/Cys565 and Cys207/Cys221. N-linked (GlcNAc...) asparagine glycosylation occurs at Asn206. 4 N-linked (GlcNAc...) asparagine glycosylation sites follow: Asn349, Asn394, Asn438, and Asn451. A Plastocyanin-like 3 domain is found at His372–Glu550. Residues His472, His475, His477, His533, Cys534, His535, His539, and Met544 each coordinate Cu cation.

The protein belongs to the multicopper oxidase family. As to quaternary structure, dimer. The cofactor is Cu cation. In terms of tissue distribution, highly expressed in young and growing tissues.

The protein localises to the secreted. It carries out the reaction 4 L-ascorbate + O2 = 4 monodehydro-L-ascorbate radical + 2 H2O. Its function is as follows. May be involved in a redox system involving ascorbic acid. This chain is L-ascorbate oxidase (AAO), found in Nicotiana tabacum (Common tobacco).